Reading from the N-terminus, the 328-residue chain is RNA 3'-terminal phosphate cyclase (328 aa).

Residues Q100 and 276–280 (HLADQ) each bind ATP. The active-site Tele-AMP-histidine intermediate is H302.

This sequence belongs to the RNA 3'-terminal cyclase family. Type 1 subfamily.

Its subcellular location is the cytoplasm. It carries out the reaction a 3'-end 3'-phospho-ribonucleotide-RNA + ATP = a 3'-end 2',3'-cyclophospho-ribonucleotide-RNA + AMP + diphosphate. Catalyzes the conversion of 3'-phosphate to a 2',3'-cyclic phosphodiester at the end of RNA. The mechanism of action of the enzyme occurs in 3 steps: (A) adenylation of the enzyme by ATP; (B) transfer of adenylate to an RNA-N3'P to produce RNA-N3'PP5'A; (C) and attack of the adjacent 2'-hydroxyl on the 3'-phosphorus in the diester linkage to produce the cyclic end product. The biological role of this enzyme is unknown but it is likely to function in some aspects of cellular RNA processing. The polypeptide is RNA 3'-terminal phosphate cyclase (rtcA) (Archaeoglobus fulgidus (strain ATCC 49558 / DSM 4304 / JCM 9628 / NBRC 100126 / VC-16)).